A 248-amino-acid polypeptide reads, in one-letter code: Gamma-interferon-inducible lysosomal thiol reductase (248 aa).

An N-terminal signal peptide occupies residues Met1 to Thr26. Residues Ala27–Pro54 constitute a propeptide, removed in mature form. Cys69 and Cys72 are oxidised to a cystine. N-linked (GlcNAc...) asparagine glycosylation is found at Asn92 and Asn105. The propeptide at Lys231–Lys248 is removed in mature form.

It belongs to the GILT family. In terms of assembly, dimer; disulfide-linked. N-glycosylated. Sugar chains contain mannose-6-phosphate. Post-translationally, synthesized as a 35 kDa precursor which is then processed into the mature 30 kDa form via cleavage of N-terminal and C-terminal propeptides. Processing of the precursor is mediated by multiple lysosomal proteases.

The protein resides in the secreted. It localises to the lysosome. Its function is as follows. Lysosomal thiol reductase that can reduce protein disulfide bonds. May facilitate the complete unfolding of proteins destined for lysosomal degradation. Plays an important role in antigen processing. Facilitates the generation of MHC class II-restricted epitodes from disulfide bond-containing antigen by the endocytic reduction of disulfide bonds. Also facilitates MHC class I-restricted recognition of exogenous antigens containing disulfide bonds by CD8+ T-cells or crosspresentation. This Mus musculus (Mouse) protein is Gamma-interferon-inducible lysosomal thiol reductase (Ifi30).